A 367-amino-acid polypeptide reads, in one-letter code: tRNA pseudouridine synthase D (367 aa).

Asp-78 acts as the Nucleophile in catalysis. In terms of domain architecture, TRUD spans 153-300; that stretch reads GVPNYFGEQR…KQERRRIRLT (148 aa).

Belongs to the pseudouridine synthase TruD family.

The enzyme catalyses uridine(13) in tRNA = pseudouridine(13) in tRNA. Functionally, responsible for synthesis of pseudouridine from uracil-13 in transfer RNAs. The protein is tRNA pseudouridine synthase D of Colwellia psychrerythraea (strain 34H / ATCC BAA-681) (Vibrio psychroerythus).